The following is a 344-amino-acid chain: Lysophosphatidic acid receptor 6 (344 aa).

Topologically, residues 1 to 25 (MVSSNGSQCPYDDSFKYTLYGCMFS) are extracellular. N-linked (GlcNAc...) asparagine glycosylation is present at Asn5. The chain crosses the membrane as a helical span at residues 26-46 (MVFVLGLISNCVAIYIFICAL). Topologically, residues 47–56 (KVRNETTTYM) are cytoplasmic. The helical transmembrane segment at 57 to 77 (INLAMSDLLFVFTLPFRIFYF) threads the bilayer. The Extracellular portion of the chain corresponds to 78–90 (ATRNWPFGDLLCK). Cys89 and Cys168 are oxidised to a cystine. A helical transmembrane segment spans residues 91–111 (ISVMLFYTNMYGSILFLTCIS). Topologically, residues 112–134 (VDRFLAIVYPFKSKTLRTKRNAK) are cytoplasmic. Residues 135–155 (IVCIAVWFTVMGGSAPAVFFQ) traverse the membrane as a helical segment. Residues 156-183 (STHSQGNNTSEACFENFPAATWKTYLSR) lie on the Extracellular side of the membrane. Residues Asn162 and Asn163 are each glycosylated (N-linked (GlcNAc...) asparagine). A helical transmembrane segment spans residues 184–204 (IVIFIEIVGFFIPLILNVTCS). Over 205 to 230 (SMVLRTLNKPVTLSRSKMNKTKVLKM) the chain is Cytoplasmic. A helical membrane pass occupies residues 231–251 (IFVHLVIFCFCFVPYNINLIL). Residues 252–272 (YSLMRTQTFVNCSVVAAVRTM) are Extracellular-facing. An N-linked (GlcNAc...) asparagine glycan is attached at Asn262. The helical transmembrane segment at 273–293 (YPITLCIAVSNCCFDPIVYYF) threads the bilayer. Cys284 is lipidated: S-palmitoyl cysteine. The Cytoplasmic portion of the chain corresponds to 294–344 (TSDTIQNSIKMKNWSVRRSDSRFSEVQGTENFIQHNLQTLKNKIFDNESAI).

Belongs to the G-protein coupled receptor 1 family. As to expression, ubiquitously expressed. Detected in the hair follicles and skin (at protein level).

The protein resides in the cell membrane. In terms of biological role, binds to oleoyl-L-alpha-lysophosphatidic acid (LPA). Intracellular cAMP is involved in the receptor activation. Important for the maintenance of hair growth and texture. In Mus musculus (Mouse), this protein is Lysophosphatidic acid receptor 6 (Lpar6).